We begin with the raw amino-acid sequence, 189 residues long: Small ribosomal subunit protein uS5 (189 aa).

The S5 DRBM domain maps to 22–85 (FVDKLVAINR…EAAKRDLIFV (64 aa)).

It belongs to the universal ribosomal protein uS5 family. As to quaternary structure, part of the 30S ribosomal subunit. Contacts proteins S4 and S8.

Its function is as follows. With S4 and S12 plays an important role in translational accuracy. In terms of biological role, located at the back of the 30S subunit body where it stabilizes the conformation of the head with respect to the body. This chain is Small ribosomal subunit protein uS5, found in Sinorhizobium fredii (strain NBRC 101917 / NGR234).